The sequence spans 330 residues: DNA-directed RNA polymerase subunit alpha (330 aa).

The segment at 1-236 is alpha N-terminal domain (alpha-NTD); it reads MQGSVTEFLK…EQLDAFVDLR (236 aa). The alpha C-terminal domain (alpha-CTD) stretch occupies residues 250–330; it reads FDPILLRPVD…NWPPASIAED (81 aa).

The protein belongs to the RNA polymerase alpha chain family. Homodimer. The RNAP catalytic core consists of 2 alpha, 1 beta, 1 beta' and 1 omega subunit. When a sigma factor is associated with the core the holoenzyme is formed, which can initiate transcription.

It carries out the reaction RNA(n) + a ribonucleoside 5'-triphosphate = RNA(n+1) + diphosphate. Its function is as follows. DNA-dependent RNA polymerase catalyzes the transcription of DNA into RNA using the four ribonucleoside triphosphates as substrates. The polypeptide is DNA-directed RNA polymerase subunit alpha (Vibrio cholerae serotype O1 (strain ATCC 39315 / El Tor Inaba N16961)).